We begin with the raw amino-acid sequence, 144 residues long: uncharacterized protein (144 aa).

Residues 24-67 (KLKELYQRLNQGINVEEVLKETVEDYKEKMEKYILEVLEEIEKY) adopt a coiled-coil conformation.

This is an uncharacterized protein from Aquifex aeolicus (strain VF5).